Reading from the N-terminus, the 138-residue chain is MPRHHQRGSAASGGSQRQLRVAETVRHAVADILSQGSAHDPDLEGHIITVPEVRMSPDLKLATIYIMPLGGRDTDVVLAALERNKKFLRGEVARRVNLKFAPDIRFRVDERFDEAERIEKLLRTPAVQRDLNSDLEES.

This sequence belongs to the RbfA family. In terms of assembly, monomer. Binds 30S ribosomal subunits, but not 50S ribosomal subunits or 70S ribosomes.

The protein resides in the cytoplasm. One of several proteins that assist in the late maturation steps of the functional core of the 30S ribosomal subunit. Associates with free 30S ribosomal subunits (but not with 30S subunits that are part of 70S ribosomes or polysomes). Required for efficient processing of 16S rRNA. May interact with the 5'-terminal helix region of 16S rRNA. The polypeptide is Ribosome-binding factor A (Bradyrhizobium sp. (strain ORS 278)).